An 89-amino-acid polypeptide reads, in one-letter code: Putative sodium channel toxin Ts30 (89 aa).

Residues 1–17 (MFKLAIILALLFFGARA) form the signal peptide. An LCN-type CS-alpha/beta domain is found at 21-85 (RDGYPILSDG…FGDSGTPECH (65 aa)). Disulfide bonds link C31/C84, C35/C59, C44/C64, and C48/C66.

In terms of tissue distribution, expressed by the venom gland.

It is found in the secreted. This Tityus serrulatus (Brazilian scorpion) protein is Putative sodium channel toxin Ts30.